A 211-amino-acid chain; its full sequence is Thiamine-phosphate synthase (211 aa).

Residues 37 to 41 (QYRDK) and asparagine 69 each bind 4-amino-2-methyl-5-(diphosphooxymethyl)pyrimidine. The Mg(2+) site is built by aspartate 70 and aspartate 89. Serine 108 lines the 4-amino-2-methyl-5-(diphosphooxymethyl)pyrimidine pocket. Residue 135 to 137 (SPT) coordinates 2-[(2R,5Z)-2-carboxy-4-methylthiazol-5(2H)-ylidene]ethyl phosphate. Lysine 138 contacts 4-amino-2-methyl-5-(diphosphooxymethyl)pyrimidine. Residues glycine 165 and 185-186 (LS) each bind 2-[(2R,5Z)-2-carboxy-4-methylthiazol-5(2H)-ylidene]ethyl phosphate.

It belongs to the thiamine-phosphate synthase family. Mg(2+) serves as cofactor.

The enzyme catalyses 2-[(2R,5Z)-2-carboxy-4-methylthiazol-5(2H)-ylidene]ethyl phosphate + 4-amino-2-methyl-5-(diphosphooxymethyl)pyrimidine + 2 H(+) = thiamine phosphate + CO2 + diphosphate. It catalyses the reaction 2-(2-carboxy-4-methylthiazol-5-yl)ethyl phosphate + 4-amino-2-methyl-5-(diphosphooxymethyl)pyrimidine + 2 H(+) = thiamine phosphate + CO2 + diphosphate. It carries out the reaction 4-methyl-5-(2-phosphooxyethyl)-thiazole + 4-amino-2-methyl-5-(diphosphooxymethyl)pyrimidine + H(+) = thiamine phosphate + diphosphate. The protein operates within cofactor biosynthesis; thiamine diphosphate biosynthesis; thiamine phosphate from 4-amino-2-methyl-5-diphosphomethylpyrimidine and 4-methyl-5-(2-phosphoethyl)-thiazole: step 1/1. Functionally, condenses 4-methyl-5-(beta-hydroxyethyl)thiazole monophosphate (THZ-P) and 2-methyl-4-amino-5-hydroxymethyl pyrimidine pyrophosphate (HMP-PP) to form thiamine monophosphate (TMP). The polypeptide is Thiamine-phosphate synthase (Thiobacillus denitrificans (strain ATCC 25259 / T1)).